Here is a 309-residue protein sequence, read N- to C-terminus: Oxygen-dependent coproporphyrinogen-III oxidase (309 aa).

Serine 94 provides a ligand contact to substrate. A divalent metal cation contacts are provided by histidine 98 and histidine 108. Histidine 108 acts as the Proton donor in catalysis. 110–112 provides a ligand contact to substrate; it reads NVR. 2 residues coordinate a divalent metal cation: histidine 147 and histidine 177. An important for dimerization region spans residues 242–277; the sequence is YVEFNLVWDRGTLFGLQTGGRTESILMSLPPLVRWE. 260-262 provides a ligand contact to substrate; the sequence is GGR.

The protein belongs to the aerobic coproporphyrinogen-III oxidase family. In terms of assembly, homodimer. It depends on a divalent metal cation as a cofactor.

The protein resides in the cytoplasm. It catalyses the reaction coproporphyrinogen III + O2 + 2 H(+) = protoporphyrinogen IX + 2 CO2 + 2 H2O. It participates in porphyrin-containing compound metabolism; protoporphyrin-IX biosynthesis; protoporphyrinogen-IX from coproporphyrinogen-III (O2 route): step 1/1. In terms of biological role, involved in the heme biosynthesis. Catalyzes the aerobic oxidative decarboxylation of propionate groups of rings A and B of coproporphyrinogen-III to yield the vinyl groups in protoporphyrinogen-IX. The sequence is that of Oxygen-dependent coproporphyrinogen-III oxidase from Yersinia pestis bv. Antiqua (strain Antiqua).